The chain runs to 210 residues: Thymidylate kinase (210 aa).

Residue 11–18 (GGEGAGKT) coordinates ATP.

This sequence belongs to the thymidylate kinase family.

It carries out the reaction dTMP + ATP = dTDP + ADP. Functionally, phosphorylation of dTMP to form dTDP in both de novo and salvage pathways of dTTP synthesis. The chain is Thymidylate kinase (tmk) from Halalkalibacterium halodurans (strain ATCC BAA-125 / DSM 18197 / FERM 7344 / JCM 9153 / C-125) (Bacillus halodurans).